Consider the following 60-residue polypeptide: Large ribosomal subunit protein bL32 (60 aa).

Belongs to the bacterial ribosomal protein bL32 family.

In Clostridium acetobutylicum (strain ATCC 824 / DSM 792 / JCM 1419 / IAM 19013 / LMG 5710 / NBRC 13948 / NRRL B-527 / VKM B-1787 / 2291 / W), this protein is Large ribosomal subunit protein bL32.